A 443-amino-acid chain; its full sequence is Packaging protein 1 (443 aa).

The interval 1–75 (MSGAADGTVP…PEAAQPPPSR (75 aa)) is disordered. Residues 13–56 (EDTHQEDSGERECEQRPVHSGREATGESDPALERPDHGERHGPE) are compositionally biased toward basic and acidic residues. 169-176 (GPTGSGKS) serves as a coordination point for ATP. Residues 433–443 (VSYANKRKWYD) form a DNA-binding region.

This sequence belongs to the adenoviridae packaging protein 1 family. Homodimer. Part of a genome packaging complex composed of packaging proteins 1, 2 and 3; this complex specifically binds to the packaging sequence on the left end of viral genomic DNA and performs packaging of the viral genome. Interacts with protein 33K.

The protein localises to the virion. The protein resides in the host nucleus. Its subcellular location is the host nucleoplasm. It localises to the host nucleolus. In terms of biological role, component of the packaging machinery which encapsidates the viral DNA into preformed capsids and transcriptional activator of the viral major late promoter (MLP). Binds, along with packaging proteins 2 and 3, to the specific packaging sequence on the left end of viral genomic DNA and displays ATPase activity thereby providing the power stroke of the packaging machinery. The activity of packaging protein IVa2 is stimulated by protein 33K which acts as a terminase. May be the protein that pumps DNA into the capsid powered by ATP hydrolysis. Specifically binds to the 5'-CG-3' nucleotides of the repeats making up the packaging sequence. Component of the DEF-A and DEF-B transcription factors that bind downstream elements of the major late promoter (MLP), and stimulate transcription from the MLP after initiation of viral DNA replication. DEF-A is a heterodimer packaging proteins 1 and 2 and DEF-B is a homodimer of packaging protein 1. The chain is Packaging protein 1 from Pantherophis guttatus (Corn snake).